Reading from the N-terminus, the 359-residue chain is 1-deoxy-D-xylulose 5-phosphate reductoisomerase (359 aa).

The NADPH site is built by T7, G8, S9, I10, A31, N33, and N111. K112 is a 1-deoxy-D-xylulose 5-phosphate binding site. E113 serves as a coordination point for NADPH. D131 is a binding site for Mn(2+). 4 residues coordinate 1-deoxy-D-xylulose 5-phosphate: S132, E133, S155, and H178. Residue E133 coordinates Mn(2+). NADPH is bound at residue G184. Positions 191, 196, 197, and 200 each coordinate 1-deoxy-D-xylulose 5-phosphate. E200 provides a ligand contact to Mn(2+).

Belongs to the DXR family. Mg(2+) serves as cofactor. Requires Mn(2+) as cofactor.

It carries out the reaction 2-C-methyl-D-erythritol 4-phosphate + NADP(+) = 1-deoxy-D-xylulose 5-phosphate + NADPH + H(+). The protein operates within isoprenoid biosynthesis; isopentenyl diphosphate biosynthesis via DXP pathway; isopentenyl diphosphate from 1-deoxy-D-xylulose 5-phosphate: step 1/6. Its function is as follows. Catalyzes the NADPH-dependent rearrangement and reduction of 1-deoxy-D-xylulose-5-phosphate (DXP) to 2-C-methyl-D-erythritol 4-phosphate (MEP). The polypeptide is 1-deoxy-D-xylulose 5-phosphate reductoisomerase (Campylobacter hominis (strain ATCC BAA-381 / DSM 21671 / CCUG 45161 / LMG 19568 / NCTC 13146 / CH001A)).